The primary structure comprises 297 residues: tRNA pseudouridine synthase B (297 aa).

The Nucleophile role is filled by Asp44.

This sequence belongs to the pseudouridine synthase TruB family. Type 1 subfamily.

The catalysed reaction is uridine(55) in tRNA = pseudouridine(55) in tRNA. Its function is as follows. Responsible for synthesis of pseudouridine from uracil-55 in the psi GC loop of transfer RNAs. The sequence is that of tRNA pseudouridine synthase B from Corynebacterium aurimucosum (strain ATCC 700975 / DSM 44827 / CIP 107346 / CN-1) (Corynebacterium nigricans).